A 261-amino-acid polypeptide reads, in one-letter code: 3-methyl-2-oxobutanoate hydroxymethyltransferase (261 aa).

2 residues coordinate Mg(2+): Asp-42 and Asp-81. Residues 42 to 43, Asp-81, and Lys-110 contribute to the 3-methyl-2-oxobutanoate site; that span reads DS. Glu-112 is a binding site for Mg(2+). The Proton acceptor role is filled by Glu-179.

It belongs to the PanB family. Homodecamer; pentamer of dimers. Mg(2+) is required as a cofactor.

It is found in the cytoplasm. The catalysed reaction is 3-methyl-2-oxobutanoate + (6R)-5,10-methylene-5,6,7,8-tetrahydrofolate + H2O = 2-dehydropantoate + (6S)-5,6,7,8-tetrahydrofolate. Its pathway is cofactor biosynthesis; (R)-pantothenate biosynthesis; (R)-pantoate from 3-methyl-2-oxobutanoate: step 1/2. Its function is as follows. Catalyzes the reversible reaction in which hydroxymethyl group from 5,10-methylenetetrahydrofolate is transferred onto alpha-ketoisovalerate to form ketopantoate. This chain is 3-methyl-2-oxobutanoate hydroxymethyltransferase, found in Thermus thermophilus (strain ATCC BAA-163 / DSM 7039 / HB27).